Reading from the N-terminus, the 398-residue chain is Mu-type opioid receptor (398 aa).

Residues 1–66 (MDSSAGPGNI…CPQTGSPSMV (66 aa)) lie on the Extracellular side of the membrane. N-linked (GlcNAc...) asparagine glycosylation is found at Asn-9, Asn-31, Asn-38, and Asn-46. A helical membrane pass occupies residues 67 to 91 (TAITIMALYSIVCVVGLFGNFLVMY). The Cytoplasmic segment spans residues 92–104 (VIVRYTKMKTATN). Residues 105-129 (IYIFNLALADALATSTLPFQSVNYL) form a helical membrane-spanning segment. The Extracellular segment spans residues 130 to 140 (MGTWPFGNILC). A disulfide bond links Cys-140 and Cys-217. Residues 141–163 (KIVISIDYYNMFTSIFTLCTMSV) traverse the membrane as a helical segment. Over 164–183 (DRYIAVCHPVKALDFRTPRN) the chain is Cytoplasmic. Residue Tyr-166 is modified to Phosphotyrosine. Residues 184 to 205 (AKIVNVCNWILSSAIGLPVMFM) traverse the membrane as a helical segment. The Extracellular portion of the chain corresponds to 206–228 (ATTKYRQGSIDCTLTFSHPTWYW). Residues 229-253 (ENLLKICVFIFAFIMPVLIITVCYG) traverse the membrane as a helical segment. At 254 to 277 (LMILRLKSVRMLSGSKEKDRNLRR) the chain is on the cytoplasmic side. Residues 278–304 (ITRMVLVVVAVFIVCWTPIHIYVIIKA) traverse the membrane as a helical segment. Over 305-312 (LITIPETT) the chain is Extracellular. A helical transmembrane segment spans residues 313-336 (FQTVSWHFCIALGYTNSCLNPVLY). Positions 332–336 (NPVLY) match the NPxxY; plays a role in stabilizing the activated conformation of the receptor motif. Residues 337 to 398 (AFLDENFKRC…NLEAETAPLP (62 aa)) lie on the Cytoplasmic side of the membrane. Cys-351 carries the S-palmitoyl cysteine lipid modification. A disordered region spans residues 362–383 (NSARIRQNTREHPSTANTVDRT). Ser-363 is modified (phosphoserine). At Thr-370 the chain carries Phosphothreonine. A Phosphoserine modification is found at Ser-375. Residue Thr-394 is modified to Phosphothreonine.

Belongs to the G-protein coupled receptor 1 family. As to quaternary structure, forms homooligomers and heterooligomers with other GPCRs, such as OPRD1, OPRK1, OPRL1, NPFFR2, ADRA2A, SSTR2, CNR1 and CCR5 (probably in dimeric forms). Interacts with heterotrimeric G proteins; interaction with a heterotrimeric complex containing GNAI1, GNB1 and GNG2 stabilizes the active conformation of the receptor and increases its affinity for endomorphin-2, the synthetic opioid peptide DAMGO and for morphinan agonists. Interacts with PPL; the interaction disrupts agonist-mediated G-protein activation. Interacts (via C-terminus) with DNAJB4 (via C-terminus). Interacts with calmodulin; the interaction inhibits the constitutive activity of OPRM1; it abolishes basal and attenuates agonist-stimulated G-protein coupling. Interacts with FLNA, PLD2, RANBP9 and WLS and GPM6A. Interacts with RTP4. Interacts with SYP and GNAS. Interacts with RGS9, RGS17, RGS20, RGS4, PPP1R9B and HINT1. Isoform 9 interacts with GRPR. In terms of processing, phosphorylated. Differentially phosphorylated in basal and agonist-induced conditions. Agonist-mediated phosphorylation modulates receptor internalization. Phosphorylated by GRK2 in a agonist-dependent manner. Phosphorylation at Tyr-166 requires receptor activation, is dependent on non-receptor protein tyrosine kinase Src and results in a decrease in agonist efficacy by reducing G-protein coupling efficiency. Phosphorylated on tyrosine residues; the phosphorylation is involved in agonist-induced G-protein-independent receptor down-regulation. Phosphorylation at Ser-375 is involved in G-protein-dependent but not beta-arrestin-dependent activation of the ERK pathway. Ubiquitinated. A basal ubiquitination seems not to be related to degradation. Ubiquitination is increased upon formation of OPRM1:OPRD1 oligomers leading to proteasomal degradation; the ubiquitination is diminished by RTP4.

It localises to the cell membrane. Its subcellular location is the cell projection. The protein resides in the axon. It is found in the perikaryon. The protein localises to the dendrite. It localises to the endosome. Its function is as follows. Receptor for endogenous opioids such as beta-endorphin and endomorphin. Receptor for natural and synthetic opioids including morphine, heroin, DAMGO, fentanyl, etorphine, buprenorphin and methadone. Also activated by enkephalin peptides, such as Met-enkephalin or Met-enkephalin-Arg-Phe, with higher affinity for Met-enkephalin-Arg-Phe. Agonist binding to the receptor induces coupling to an inactive GDP-bound heterotrimeric G-protein complex and subsequent exchange of GDP for GTP in the G-protein alpha subunit leading to dissociation of the G-protein complex with the free GTP-bound G-protein alpha and the G-protein beta-gamma dimer activating downstream cellular effectors. The agonist- and cell type-specific activity is predominantly coupled to pertussis toxin-sensitive G(i) and G(o) G alpha proteins, GNAI1, GNAI2, GNAI3 and GNAO1 isoforms Alpha-1 and Alpha-2, and to a lesser extent to pertussis toxin-insensitive G alpha proteins GNAZ and GNA15. They mediate an array of downstream cellular responses, including inhibition of adenylate cyclase activity and both N-type and L-type calcium channels, activation of inward rectifying potassium channels, mitogen-activated protein kinase (MAPK), phospholipase C (PLC), phosphoinositide/protein kinase (PKC), phosphoinositide 3-kinase (PI3K) and regulation of NF-kappa-B. Also couples to adenylate cyclase stimulatory G alpha proteins. The selective temporal coupling to G-proteins and subsequent signaling can be regulated by RGSZ proteins, such as RGS9, RGS17 and RGS4. Phosphorylation by members of the GPRK subfamily of Ser/Thr protein kinases and association with beta-arrestins is involved in short-term receptor desensitization. Beta-arrestins associate with the GPRK-phosphorylated receptor and uncouple it from the G-protein thus terminating signal transduction. The phosphorylated receptor is internalized through endocytosis via clathrin-coated pits which involves beta-arrestins. The activation of the ERK pathway occurs either in a G-protein-dependent or a beta-arrestin-dependent manner and is regulated by agonist-specific receptor phosphorylation. Acts as a class A G-protein coupled receptor (GPCR) which dissociates from beta-arrestin at or near the plasma membrane and undergoes rapid recycling. Receptor down-regulation pathways are varying with the agonist and occur dependent or independent of G-protein coupling. Endogenous ligands induce rapid desensitization, endocytosis and recycling. Heterooligomerization with other GPCRs can modulate agonist binding, signaling and trafficking properties. Isoform 9 is involved in morphine-induced scratching and seems to cross-activate GRPR in response to morphine. This is Mu-type opioid receptor (Oprm1) from Mus musculus (Mouse).